Here is a 686-residue protein sequence, read N- to C-terminus: Methionine--tRNA ligase (686 aa).

A 'HIGH' region motif is present at residues 15–25; sequence PYANGPIHLGH. Positions 146, 149, 159, and 162 each coordinate Zn(2+). The 'KMSKS' region signature appears at 332–336; the sequence is KMSKS. K335 lines the ATP pocket. Residues 585–686 form the tRNA-binding domain; sequence TFAKTDLRVA…DGAKPGQRIM (102 aa).

The protein belongs to the class-I aminoacyl-tRNA synthetase family. MetG type 1 subfamily. As to quaternary structure, homodimer. Zn(2+) serves as cofactor.

The protein resides in the cytoplasm. The enzyme catalyses tRNA(Met) + L-methionine + ATP = L-methionyl-tRNA(Met) + AMP + diphosphate. Is required not only for elongation of protein synthesis but also for the initiation of all mRNA translation through initiator tRNA(fMet) aminoacylation. The chain is Methionine--tRNA ligase from Psychromonas ingrahamii (strain DSM 17664 / CCUG 51855 / 37).